A 257-amino-acid chain; its full sequence is MTKTIKEINRLLEAISELSDPYFIELESDDRVGVKKAVNKRRKAIQAMVDEELRLDKMLSYEKVLYQEGFSLIAGIDEVGRGPLAGPVVAACVILPIDCKIKGLNDSKKIPKSKHLSIFQAIQERALGIGIGIVDNHVIDDINIYQATKVAMIEAIKNIKGDVTEPDYLLIDAMTLETPIPQQSIIKGDANSMSIAAASIVAKVTRDRLMMDYEKAFPGYDFAKNAGYGTTSHLNGLKQFGVTPIHRTSFEPIKSML.

In terms of domain architecture, RNase H type-2 spans 71–257 (SLIAGIDEVG…TSFEPIKSML (187 aa)). Aspartate 77, glutamate 78, and aspartate 172 together coordinate a divalent metal cation.

This sequence belongs to the RNase HII family. Mn(2+) serves as cofactor. It depends on Mg(2+) as a cofactor.

Its subcellular location is the cytoplasm. It catalyses the reaction Endonucleolytic cleavage to 5'-phosphomonoester.. Functionally, endonuclease that specifically degrades the RNA of RNA-DNA hybrids. The protein is Ribonuclease HII of Streptococcus uberis (strain ATCC BAA-854 / 0140J).